We begin with the raw amino-acid sequence, 122 residues long: MIQTETILEVADNSGARRVQCIKVLGGSHRRYASVGDIIKVSVKEAIPRGRVKKGDVMNAVVVRTKKGVRRPDGSVLRFDDNAAVLLNQNKAPIATRIFGPVTRELRGDQFMKIVSLAPEVL.

Belongs to the universal ribosomal protein uL14 family. As to quaternary structure, part of the 50S ribosomal subunit. Forms a cluster with proteins L3 and L19. In the 70S ribosome, L14 and L19 interact and together make contacts with the 16S rRNA in bridges B5 and B8.

Its function is as follows. Binds to 23S rRNA. Forms part of two intersubunit bridges in the 70S ribosome. The sequence is that of Large ribosomal subunit protein uL14 from Psychrobacter sp. (strain PRwf-1).